We begin with the raw amino-acid sequence, 238 residues long: Xyloglucan-specific endo-beta-1,4-glucanase A (238 aa).

A signal peptide spans 1–14 (MKLSLLSLATLASA).

It belongs to the glycosyl hydrolase 12 (cellulase H) family.

Its subcellular location is the secreted. It carries out the reaction xyloglucan + H2O = xyloglucan oligosaccharides.. Its function is as follows. Catalyzes endohydrolysis of 1,4-beta-D-glucosidic linkages in xyloglucan with retention of the beta-configuration of the glycosyl residues. Specific for xyloglucan and does not hydrolyze other cell wall components. This chain is Xyloglucan-specific endo-beta-1,4-glucanase A (xgeA), found in Aspergillus aculeatus.